We begin with the raw amino-acid sequence, 249 residues long: MEMKQISETTLKIMITMEDLEEHGMELKDFLIPQEKTEEFFYTVMDELDLPDNFKNSGMLSFRVTPRKDRVDVFVTKSDLKEDLDFNDLSDMEDYSGLSPEEFLKALEDNFMDKGDIEAHHKLEEHDKTLKEVDETMTEPAKEVAEETIREDYTHYVLAFSDFDQVVTFAQGLKNVSVEGSEFYKLGDVYYMTILLYLADEPDYYANNMYARFLEYANVADRTRPYLQEHATILMEEDALPVLQATKWS.

Belongs to the MecA family. Homodimer.

Functionally, enables the recognition and targeting of unfolded and aggregated proteins to the ClpC protease or to other proteins involved in proteolysis. This Streptococcus thermophilus (strain ATCC BAA-491 / LMD-9) protein is Adapter protein MecA.